A 513-amino-acid chain; its full sequence is Cytochrome P450 1A2 (513 aa).

O-linked (GlcNAc) serine glycosylation occurs at S68. C456 lines the heme pocket.

This sequence belongs to the cytochrome P450 family. As to quaternary structure, interacts with PGRMC1; the interaction requires PGRMC1 homodimerization. Requires heme as cofactor.

It localises to the endoplasmic reticulum membrane. The protein resides in the microsome membrane. The catalysed reaction is an organic molecule + reduced [NADPH--hemoprotein reductase] + O2 = an alcohol + oxidized [NADPH--hemoprotein reductase] + H2O + H(+). It carries out the reaction 17beta-estradiol + reduced [NADPH--hemoprotein reductase] + O2 = 2-hydroxy-17beta-estradiol + oxidized [NADPH--hemoprotein reductase] + H2O + H(+). It catalyses the reaction 17beta-estradiol + reduced [NADPH--hemoprotein reductase] + O2 = 4-hydroxy-17beta-estradiol + oxidized [NADPH--hemoprotein reductase] + H2O + H(+). The enzyme catalyses estrone + reduced [NADPH--hemoprotein reductase] + O2 = 2-hydroxyestrone + oxidized [NADPH--hemoprotein reductase] + H2O + H(+). The catalysed reaction is estrone + reduced [NADPH--hemoprotein reductase] + O2 = 4-hydroxyestrone + oxidized [NADPH--hemoprotein reductase] + H2O + H(+). It carries out the reaction cholesterol + reduced [NADPH--hemoprotein reductase] + O2 = 25-hydroxycholesterol + oxidized [NADPH--hemoprotein reductase] + H2O + H(+). It catalyses the reaction all-trans-retinol + reduced [NADPH--hemoprotein reductase] + O2 = all-trans-retinal + oxidized [NADPH--hemoprotein reductase] + 2 H2O + H(+). The enzyme catalyses all-trans-retinal + reduced [NADPH--hemoprotein reductase] + O2 = all-trans-retinoate + oxidized [NADPH--hemoprotein reductase] + H2O + 2 H(+). The catalysed reaction is (5Z,8Z,11Z,14Z)-eicosatetraenoate + reduced [NADPH--hemoprotein reductase] + O2 = (14R,15S)-epoxy-(5Z,8Z,11Z)-eicosatrienoate + oxidized [NADPH--hemoprotein reductase] + H2O + H(+). It carries out the reaction (5Z,8Z,11Z,14Z)-eicosatetraenoate + reduced [NADPH--hemoprotein reductase] + O2 = (14S,15R)-epoxy-(5Z,8Z,11Z)-eicosatrienoate + oxidized [NADPH--hemoprotein reductase] + H2O + H(+). It catalyses the reaction (5Z,8Z,11Z,14Z,17Z)-eicosapentaenoate + reduced [NADPH--hemoprotein reductase] + O2 = (17R,18S)-epoxy-(5Z,8Z,11Z,14Z)-eicosatetraenoate + oxidized [NADPH--hemoprotein reductase] + H2O + H(+). The enzyme catalyses (4Z,7Z,10Z,13Z,16Z,19Z)-docosahexaenoate + reduced [NADPH--hemoprotein reductase] + O2 = (19R,20S)-epoxy-(4Z,7Z,10Z,13Z,16Z)-docosapentaenoate + oxidized [NADPH--hemoprotein reductase] + H2O + H(+). The catalysed reaction is (5S)-hydroperoxy-(6E,8Z,11Z,14Z)-eicosatetraenoate = 5-oxo-(6E,8Z,11Z,14Z)-eicosatetraenoate + H2O. It carries out the reaction (12S)-hydroperoxy-(5Z,8Z,10E,14Z)-eicosatetraenoate = 12-oxo-(5Z,8Z,10E,14Z)-eicosatetraenoate + H2O. It catalyses the reaction (15S)-hydroperoxy-(5Z,8Z,11Z,13E)-eicosatetraenoate = 15-oxo-(5Z,8Z,11Z,13E)-eicosatetraenoate + H2O. The enzyme catalyses (13S)-hydroperoxy-(9Z,11E)-octadecadienoate = 13-oxo-(9Z,11E)-octadecadienoate + H2O. The catalysed reaction is (5Z,8Z,11Z,14Z)-eicosatetraenoate + reduced [NADPH--hemoprotein reductase] + O2 = 13-hydroxy-(5Z,8Z,11Z,14Z)-eicosatetraenoate + oxidized [NADPH--hemoprotein reductase] + H2O + H(+). It carries out the reaction (5Z,8Z,11Z,14Z)-eicosatetraenoate + reduced [NADPH--hemoprotein reductase] + O2 = 19-hydroxy-(5Z,8Z,11Z,14Z)-eicosatetraenoate + oxidized [NADPH--hemoprotein reductase] + H2O + H(+). It catalyses the reaction (9Z,12Z)-octadecadienoate + reduced [NADPH--hemoprotein reductase] + O2 = 11-hydroxy-(9Z,12Z)-octadecadienoate + oxidized [NADPH--hemoprotein reductase] + H2O + H(+). It participates in cofactor metabolism; retinol metabolism. The protein operates within steroid metabolism; cholesterol metabolism. Its pathway is lipid metabolism; arachidonate metabolism. In terms of biological role, a cytochrome P450 monooxygenase involved in the metabolism of various endogenous substrates, including fatty acids, steroid hormones and vitamins. Mechanistically, uses molecular oxygen inserting one oxygen atom into a substrate, and reducing the second into a water molecule, with two electrons provided by NADPH via cytochrome P450 reductase (NADPH--hemoprotein reductase). Catalyzes the hydroxylation of carbon-hydrogen bonds. Exhibits high catalytic activity for the formation of hydroxyestrogens from estrone (E1) and 17beta-estradiol (E2), namely 2-hydroxy E1 and E2. Metabolizes cholesterol toward 25-hydroxycholesterol, a physiological regulator of cellular cholesterol homeostasis. May act as a major enzyme for all-trans retinoic acid biosynthesis in the liver. Catalyzes two successive oxidative transformation of all-trans retinol to all-trans retinal and then to the active form all-trans retinoic acid. Primarily catalyzes stereoselective epoxidation of the last double bond of polyunsaturated fatty acids (PUFA), displaying a strong preference for the (R,S) stereoisomer. Catalyzes bisallylic hydroxylation and omega-1 hydroxylation of PUFA. May also participate in eicosanoids metabolism by converting hydroperoxide species into oxo metabolites (lipoxygenase-like reaction, NADPH-independent). Plays a role in the oxidative metabolism of xenobiotics. Catalyzes the N-hydroxylation of heterocyclic amines and the O-deethylation of phenacetin. Metabolizes caffeine via N3-demethylation. The chain is Cytochrome P450 1A2 (Cyp1a2) from Rattus norvegicus (Rat).